A 170-amino-acid chain; its full sequence is Neurotensin/neuromedin N (170 aa).

The signal sequence occupies residues 1-23 (MMAGMKIQLVCMILLAFSSWSLC).

Belongs to the neurotensin family. In terms of assembly, interacts with NTSR1. Interacts with SORT1. Interacts with SORL1. Post-translationally, neurotensin is cleaved and degraded by Angiotensin-converting enzyme (ACE) and neprilysin (MME). In terms of tissue distribution, brain and gut.

It is found in the secreted. The protein resides in the cytoplasmic vesicle. Its subcellular location is the secretory vesicle. Neurotensin may play an endocrine or paracrine role in the regulation of fat metabolism. It causes contraction of smooth muscle. This is Neurotensin/neuromedin N (NTS) from Bos taurus (Bovine).